Here is a 310-residue protein sequence, read N- to C-terminus: Homoserine kinase (310 aa).

Proline 91–cysteine 101 contributes to the ATP binding site.

It belongs to the GHMP kinase family. Homoserine kinase subfamily.

It is found in the cytoplasm. It carries out the reaction L-homoserine + ATP = O-phospho-L-homoserine + ADP + H(+). Its pathway is amino-acid biosynthesis; L-threonine biosynthesis; L-threonine from L-aspartate: step 4/5. Functionally, catalyzes the ATP-dependent phosphorylation of L-homoserine to L-homoserine phosphate. The sequence is that of Homoserine kinase from Escherichia coli O81 (strain ED1a).